Reading from the N-terminus, the 379-residue chain is MIYLPDGVQDFLPEEYEFKRNIEDKFREVFKSFGYKEIMPPTFEYSENFSHLFDENSMYRFFDKKGNILALRPDVTAQIARIVSTKLEGRYPLKLCYVANVYRYEDTQVGKMREFTQAGVELIGTNHEESDAEVIALSIEALKSTGLKDFKIDIGHAEVFGSIVRNLNLGNEDVNLLRELLEQKNQSAIEDFIKQKEIKREEAKLLRELPLLFGGEEILEKLKKENFKETEGVLEYLDRVYKILEDFGMKEYISFDLGMVQNLNYYTGIIFRGFVKGLGYAICTGGRYDKLLKIYGKDLPATGFAISVERVMLALQRQSKGEWVKPRRVLVRYKEEERRRAYEKANVLRKEGNVVEMYTFKRCENIDLKSFDEVVDVGE.

It belongs to the class-II aminoacyl-tRNA synthetase family. HisZ subfamily. In terms of assembly, heteromultimer composed of HisG and HisZ subunits.

The protein resides in the cytoplasm. It functions in the pathway amino-acid biosynthesis; L-histidine biosynthesis; L-histidine from 5-phospho-alpha-D-ribose 1-diphosphate: step 1/9. Its function is as follows. Required for the first step of histidine biosynthesis. May allow the feedback regulation of ATP phosphoribosyltransferase activity by histidine. The sequence is that of ATP phosphoribosyltransferase regulatory subunit from Caldanaerobacter subterraneus subsp. tengcongensis (strain DSM 15242 / JCM 11007 / NBRC 100824 / MB4) (Thermoanaerobacter tengcongensis).